Here is a 189-residue protein sequence, read N- to C-terminus: Transcription factor FapR (189 aa).

The protein belongs to the FapR family.

In terms of biological role, transcriptional factor involved in regulation of membrane lipid biosynthesis by repressing genes involved in fatty acid and phospholipid metabolism. The polypeptide is Transcription factor FapR (Exiguobacterium sibiricum (strain DSM 17290 / CCUG 55495 / CIP 109462 / JCM 13490 / 255-15)).